Consider the following 97-residue polypeptide: Putative pterin-4-alpha-carbinolamine dehydratase (97 aa).

This sequence belongs to the pterin-4-alpha-carbinolamine dehydratase family.

The catalysed reaction is (4aS,6R)-4a-hydroxy-L-erythro-5,6,7,8-tetrahydrobiopterin = (6R)-L-erythro-6,7-dihydrobiopterin + H2O. The chain is Putative pterin-4-alpha-carbinolamine dehydratase from Christiangramia forsetii (strain DSM 17595 / CGMCC 1.15422 / KT0803) (Gramella forsetii).